A 318-amino-acid polypeptide reads, in one-letter code: Acetyl-coenzyme A carboxylase carboxyl transferase subunit alpha (318 aa).

A CoA carboxyltransferase C-terminal domain is found at 41–295 (HLEKKNEELT…KQRILTDLNE (255 aa)).

Belongs to the AccA family. In terms of assembly, acetyl-CoA carboxylase is a heterohexamer composed of biotin carboxyl carrier protein (AccB), biotin carboxylase (AccC) and two subunits each of ACCase subunit alpha (AccA) and ACCase subunit beta (AccD).

It is found in the cytoplasm. The catalysed reaction is N(6)-carboxybiotinyl-L-lysyl-[protein] + acetyl-CoA = N(6)-biotinyl-L-lysyl-[protein] + malonyl-CoA. It participates in lipid metabolism; malonyl-CoA biosynthesis; malonyl-CoA from acetyl-CoA: step 1/1. In terms of biological role, component of the acetyl coenzyme A carboxylase (ACC) complex. First, biotin carboxylase catalyzes the carboxylation of biotin on its carrier protein (BCCP) and then the CO(2) group is transferred by the carboxyltransferase to acetyl-CoA to form malonyl-CoA. This chain is Acetyl-coenzyme A carboxylase carboxyl transferase subunit alpha, found in Tolumonas auensis (strain DSM 9187 / NBRC 110442 / TA 4).